Consider the following 63-residue polypeptide: Venom peptide 2b (63 aa).

Positions 1 to 22 are cleaved as a signal peptide; that stretch reads MRGTSFILFAVVVILGFLHGNA. AXPX repeat units lie at residues 22 to 25, 26 to 29, 32 to 35, 38 to 41, and 44 to 47; these read AEPL, ANPE, and ANPD. The propeptide occupies 23–48; that stretch reads EPLANPEPSANPDPLANPDPLANPEA. Leu62 is subject to Leucine amide.

The protein belongs to the MCD family. Mastoparan subfamily. Expressed by the venom gland.

It is found in the secreted. Its subcellular location is the target cell membrane. Antimicrobial peptide with strong and moderate activity against the fungi B.cinerea (MIC=5 uM) and C.albicans (MIC=100 uM), the Gram-negative bacterium E.coli (MIC=200 uM) and the Gram-positive bacterium S.aureus (MIC=25 uM). Shows cytolytic activity against insect cell lines. Has potent hemolytic activity against human erythrocytes (EC(50)=64 uM). In vivo, peptide injection in the vicinity of the head and thorax of lepidopteran larvae induces feeding disorder followed by death due to starvation. This chain is Venom peptide 2b, found in Eumenes pomiformis (Potter wasp).